The primary structure comprises 269 residues: Tryptophan synthase alpha chain (269 aa).

Catalysis depends on proton acceptor residues glutamate 49 and aspartate 60.

It belongs to the TrpA family. In terms of assembly, tetramer of two alpha and two beta chains.

It carries out the reaction (1S,2R)-1-C-(indol-3-yl)glycerol 3-phosphate + L-serine = D-glyceraldehyde 3-phosphate + L-tryptophan + H2O. The protein operates within amino-acid biosynthesis; L-tryptophan biosynthesis; L-tryptophan from chorismate: step 5/5. The alpha subunit is responsible for the aldol cleavage of indoleglycerol phosphate to indole and glyceraldehyde 3-phosphate. The protein is Tryptophan synthase alpha chain of Salmonella arizonae (strain ATCC BAA-731 / CDC346-86 / RSK2980).